The chain runs to 574 residues: Pyruvate kinase PKLR (574 aa).

4 positions are modified to phosphoserine: Ser2, Ser19, Ser26, and Ser43. Substrate is bound at residue Arg116. Asn118, Ser120, Asp156, and Thr157 together coordinate K(+). An ATP-binding site is contributed by 118–121; the sequence is NFSH. The ATP site is built by Arg163 and Lys250. Ser292 bears the Phosphoserine mark. Position 313 (Lys313) interacts with substrate. Glu315 lines the Mn(2+) pocket. 3 residues coordinate substrate: Gly338, Asp339, and Thr371. Asp339 serves as a coordination point for Mn(2+). Beta-D-fructose 1,6-bisphosphate is bound by residues 475–480, Trp525, Arg532, and 559–564; these read TKTGRS and RPGSGY.

The protein belongs to the pyruvate kinase family. As to quaternary structure, homotetramer. Mg(2+) serves as cofactor. It depends on Mn(2+) as a cofactor. The cofactor is K(+).

It catalyses the reaction pyruvate + ATP = phosphoenolpyruvate + ADP + H(+). It participates in carbohydrate degradation; glycolysis; pyruvate from D-glyceraldehyde 3-phosphate: step 5/5. Its activity is regulated as follows. Allosterically activated by fructose 1,6-bisphosphate. Its function is as follows. Pyruvate kinase that catalyzes the conversion of phosphoenolpyruvate to pyruvate with the synthesis of ATP, and which plays a key role in glycolysis. The polypeptide is Pyruvate kinase PKLR (Pklr) (Rattus norvegicus (Rat)).